The sequence spans 293 residues: 4-hydroxy-tetrahydrodipicolinate synthase (293 aa).

Residue serine 45 participates in pyruvate binding. The active-site Proton donor/acceptor is the tyrosine 133. Lysine 161 serves as the catalytic Schiff-base intermediate with substrate. Residue isoleucine 203 participates in pyruvate binding.

Belongs to the DapA family. In terms of assembly, homotetramer; dimer of dimers.

It localises to the cytoplasm. It catalyses the reaction L-aspartate 4-semialdehyde + pyruvate = (2S,4S)-4-hydroxy-2,3,4,5-tetrahydrodipicolinate + H2O + H(+). It functions in the pathway amino-acid biosynthesis; L-lysine biosynthesis via DAP pathway; (S)-tetrahydrodipicolinate from L-aspartate: step 3/4. Catalyzes the condensation of (S)-aspartate-beta-semialdehyde [(S)-ASA] and pyruvate to 4-hydroxy-tetrahydrodipicolinate (HTPA). The polypeptide is 4-hydroxy-tetrahydrodipicolinate synthase (Psychromonas ingrahamii (strain DSM 17664 / CCUG 51855 / 37)).